We begin with the raw amino-acid sequence, 260 residues long: Pectate lyase H (260 aa).

The N-terminal stretch at 1-17 (MFIKNGLLLSLATSVLA) is a signal peptide.

Belongs to the polysaccharide lyase 3 family. The cofactor is Ca(2+).

The protein localises to the secreted. The catalysed reaction is Eliminative cleavage of (1-&gt;4)-alpha-D-galacturonan to give oligosaccharides with 4-deoxy-alpha-D-galact-4-enuronosyl groups at their non-reducing ends.. In terms of biological role, pectinolytic enzyme consist of four classes of enzymes: pectin lyase, polygalacturonase, pectin methylesterase and rhamnogalacturonase. Among pectinolytic enzymes, pectin lyase is the most important in depolymerization of pectin, since it cleaves internal glycosidic bonds of highly methylated pectins. Favors pectate, the anion, over pectin, the methyl ester. This Emericella nidulans (strain FGSC A4 / ATCC 38163 / CBS 112.46 / NRRL 194 / M139) (Aspergillus nidulans) protein is Pectate lyase H (plyH).